Consider the following 203-residue polypeptide: bMERB domain-containing protein 1 (203 aa).

The region spanning 3–149 is the bMERB domain; the sequence is LKQSLSVHLE…EQEEDKEMAD (147 aa). The disordered stretch occupies residues 160–186; the sequence is KVTKSSASSRAEKKAEPPPSKPTVAKT.

The polypeptide is bMERB domain-containing protein 1 (Bmerb1) (Rattus norvegicus (Rat)).